The sequence spans 77 residues: DNA-directed RNA polymerase subunit Rpo5 (77 aa).

Belongs to the archaeal Rpo5/eukaryotic RPB5 RNA polymerase subunit family. As to quaternary structure, part of the RNA polymerase complex.

It is found in the cytoplasm. It carries out the reaction RNA(n) + a ribonucleoside 5'-triphosphate = RNA(n+1) + diphosphate. DNA-dependent RNA polymerase (RNAP) catalyzes the transcription of DNA into RNA using the four ribonucleoside triphosphates as substrates. The sequence is that of DNA-directed RNA polymerase subunit Rpo5 from Methanothermobacter thermautotrophicus (strain ATCC 29096 / DSM 1053 / JCM 10044 / NBRC 100330 / Delta H) (Methanobacterium thermoautotrophicum).